We begin with the raw amino-acid sequence, 101 residues long: Urease subunit beta (101 aa).

This sequence belongs to the urease beta subunit family. Heterotrimer of UreA (gamma), UreB (beta) and UreC (alpha) subunits. Three heterotrimers associate to form the active enzyme.

It is found in the cytoplasm. The enzyme catalyses urea + 2 H2O + H(+) = hydrogencarbonate + 2 NH4(+). Its pathway is nitrogen metabolism; urea degradation; CO(2) and NH(3) from urea (urease route): step 1/1. The protein is Urease subunit beta of Bradyrhizobium diazoefficiens (strain JCM 10833 / BCRC 13528 / IAM 13628 / NBRC 14792 / USDA 110).